A 73-amino-acid polypeptide reads, in one-letter code: Defensin-like protein 34 (73 aa).

The signal sequence occupies residues 1–25 (MASNKVSFFLVLCLCVLSTAEFGEA). Disulfide bonds link Cys33–Cys59, Cys45–Cys68, and Cys49–Cys70.

This sequence belongs to the DEFL family.

Its subcellular location is the secreted. The protein is Defensin-like protein 34 of Arabidopsis thaliana (Mouse-ear cress).